A 515-amino-acid chain; its full sequence is MAARAGFQSVAPSGGAGASGGAGAAAALGPGGTPGPPVRMGPAPGQGLYRSPMPGAAYPRPGMLPGSRMTPQGPSMGPPGYGGNPSVRPGLAQSGMDQSRKRPAPQQIQQVQQQAVQNRNHNAKKKKMADKILPQRIRELVPESQAYMDLLAFERKLDQTIMRKRLDIQEALKRPIKQKRKLRIFISNTFNPAKSDAEDGEGTVASWELRVEGRLLEDSALSKYDATKQKRKFSSFFKSLVIELDKDLYGPDNHLVEWHRTATTQETDGFQVKRPGDVNVRCTVLLMLDYQPPQFKLDPRLARLLGIHTQTRPVIIQALWQYIKTHKLQDPHEREFVICDKYLQQIFESQRMKFSEIPQRLHALLMPPEPIIINHVISVDPNDQKKTACYDIDVEVDDTLKTQMNSFLLSTASQQEIATLDNKIHETIETINQLKTQREFMLSFARDPQGFINDWLQSQCRDLKTMTDVVGNPEEERRAEFYFQPWAQEAVCRYFYSKVQQRRQELEQALGIRNT.

A disordered region spans residues 1–103 (MAARAGFQSV…SGMDQSRKRP (103 aa)). Gly residues predominate over residues 14–23 (GGAGASGGAG). Positions 43-167 (APGQGLYRSP…DQTIMRKRLD (125 aa)) are interaction with ESR1, NR1H4, NR3C1, PGR and SMARCA4. Residues Arg-68 and Arg-88 each carry the asymmetric dimethylarginine modification. Lys-101 is covalently cross-linked (Glycyl lysine isopeptide (Lys-Gly) (interchain with G-Cter in SUMO2)). An interaction with SMARCC1 and SMARCC2 region spans residues 168-474 (IQEALKRPIK…TMTDVVGNPE (307 aa)). The segment at 180–515 (RKLRIFISNT…LEQALGIRNT (336 aa)) is necessary for GR/NR3C1-mediated remodeling and transcription from chromatin; required for GR/NR3C1 interaction with the BRG1/SMARCA4 complex in vivo. Thr-203 is subject to Phosphothreonine. N6-acetyllysine is present on Lys-223. Residues 290–367 (YQPPQFKLDP…PQRLHALLMP (78 aa)) form the SWIB/MDM2 domain. A coiled-coil region spans residues 412 to 440 (ASQQEIATLDNKIHETIETINQLKTQREF).

The protein belongs to the SMARCD family. In terms of assembly, component of the multiprotein chromatin-remodeling complexes SWI/SNF: SWI/SNF-A (BAF), SWI/SNF-B (PBAF) and related complexes. The canonical complex contains a catalytic subunit (either SMARCA4/BRG1/BAF190A or SMARCA2/BRM/BAF190B), and at least SMARCE1, ACTL6A/BAF53, SMARCC1/BAF155, SMARCC2/BAF170, and SMARCB1/SNF5/BAF47. Other subunits specific to each of the complexes may also be present permitting several possible combinations developmentally and tissue specific. Component of the BAF complex, which includes at least actin (ACTB), ARID1A/BAF250A, ARID1B/BAF250B, SMARCA2/BRM, SMARCA4/BRG1/BAF190A, ACTL6A/BAF53, ACTL6B/BAF53B, SMARCE1/BAF57, SMARCC1/BAF155, SMARCC2/BAF170, SMARCB1/SNF5/INI1, and one or more SMARCD1/BAF60A, SMARCD2/BAF60B, or SMARCD3/BAF60C. In muscle cells, the BAF complex also contains DPF3. Component of neural progenitors-specific chromatin remodeling complex (npBAF complex) composed of at least, ARID1A/BAF250A or ARID1B/BAF250B, SMARCD1/BAF60A, SMARCD3/BAF60C, SMARCA2/BRM/BAF190B, SMARCA4/BRG1/BAF190A, SMARCB1/BAF47, SMARCC1/BAF155, SMARCE1/BAF57, SMARCC2/BAF170, PHF10/BAF45A, ACTL6A/BAF53A and actin. Component of neuron-specific chromatin remodeling complex (nBAF complex) composed of at least, ARID1A/BAF250A or ARID1B/BAF250B, SMARCD1/BAF60A, SMARCD3/BAF60C, SMARCA2/BRM/BAF190B, SMARCA4/BRG1/BAF190A, SMARCB1/BAF47, SMARCC1/BAF155, SMARCE1/BAF57, SMARCC2/BAF170, DPF1/BAF45B, DPF3/BAF45C, ACTL6B/BAF53B and actin. Component of the SWI/SNF-B (PBAF) chromatin remodeling complex, at least composed of SMARCA4/BRG1, SMARCB1/BAF47/SNF5, ACTL6A/BAF53A or ACTL6B/BAF53B, SMARCE1/BAF57, SMARCD1/BAF60A, SMARCD2/BAF60B, perhaps SMARCD3/BAF60C, SMARCC1/BAF155, SMARCC2/BAF170, PBRM1/BAF180, ARID2/BAF200 and actin (ACTB). Component of SWI/SNF (GBAF) subcomplex, which includes at least BICRA or BICRAL (mutually exclusive), BRD9, SS18, SMARCA2/BRM, SMARCA4/BRG1/BAF190A, ACTL6A/BAF53, SMARCC1/BAF155, and SMARCD1/BAF60A. Specifically interacts with the VDR heterodimer complex. Interacts with ESR1, NR3C1, NR1H4, PGR, SMARCA4, SMARCC1 and SMARCC2. Interacts with DPF2. Interacts with DPF3a (isoform 2 of DPF3/BAF45C) and with HDGFL2 in a DPF3a-dependent manner. Interacts with FOS, FOSB isoform 1 and 2, FOSL1 and FOSL2. As to expression, expressed in all tissues tested, including brain, heart, kidney, liver, lung, muscle, pancreas and placenta.

Its subcellular location is the nucleus. In terms of biological role, involved in transcriptional activation and repression of select genes by chromatin remodeling (alteration of DNA-nucleosome topology). Component of SWI/SNF chromatin remodeling complexes that carry out key enzymatic activities, changing chromatin structure by altering DNA-histone contacts within a nucleosome in an ATP-dependent manner. Belongs to the neural progenitors-specific chromatin remodeling complex (npBAF complex) and the neuron-specific chromatin remodeling complex (nBAF complex). During neural development a switch from a stem/progenitor to a postmitotic chromatin remodeling mechanism occurs as neurons exit the cell cycle and become committed to their adult state. The transition from proliferating neural stem/progenitor cells to postmitotic neurons requires a switch in subunit composition of the npBAF and nBAF complexes. As neural progenitors exit mitosis and differentiate into neurons, npBAF complexes which contain ACTL6A/BAF53A and PHF10/BAF45A, are exchanged for homologous alternative ACTL6B/BAF53B and DPF1/BAF45B or DPF3/BAF45C subunits in neuron-specific complexes (nBAF). The npBAF complex is essential for the self-renewal/proliferative capacity of the multipotent neural stem cells. The nBAF complex along with CREST plays a role regulating the activity of genes essential for dendrite growth. Has a strong influence on vitamin D-mediated transcriptional activity from an enhancer vitamin D receptor element (VDRE). May be a link between mammalian SWI-SNF-like chromatin remodeling complexes and the vitamin D receptor (VDR) heterodimer. Mediates critical interactions between nuclear receptors and the BRG1/SMARCA4 chromatin-remodeling complex for transactivation. Interacts with AKIRIN2. This is SWI/SNF-related matrix-associated actin-dependent regulator of chromatin subfamily D member 1 from Homo sapiens (Human).